The chain runs to 323 residues: Synaptonemal complex central element protein 1 (323 aa).

Over residues 1–10 the composition is skewed to polar residues; it reads MAGRPGSSNA. Disordered regions lie at residues 1 to 31 and 294 to 323; these read MAGR…SSQK and KQEE…PSTK. Basic and acidic residues-rich tracts occupy residues 20 to 31 and 313 to 323; these read DEARGQAESSQK and SEEKDQEPSTK. Residues 25–290 adopt a coiled-coil conformation; that stretch reads QAESSQKIED…EKLGVQVLAQ (266 aa).

The protein belongs to the SYCE family. As to quaternary structure, homodimer. Found in a complex with SYCP1 and SYCE2. Interacts with SYCP1, SYCE2 and SYCE3. Interacts with SIX6OS1.

Its subcellular location is the nucleus. It localises to the chromosome. In terms of biological role, major component of the transverse central element of synaptonemal complexes (SCS), formed between homologous chromosomes during meiotic prophase. Requires SYCP1 in order to be incorporated into the central element. May have a role in the synaptonemal complex assembly, stabilization and recombination. This chain is Synaptonemal complex central element protein 1 (SYCE1), found in Bos taurus (Bovine).